The chain runs to 267 residues: Putative ankyrin repeat protein RF_1099 (267 aa).

ANK repeat units lie at residues 46 to 75, 78 to 107, 136 to 165, and 170 to 199; these read DPITPIADAIKADNLEEVKKILDEGYGVNQ, LGWVPLDYAISNNNIKIADFLLKRDASMSL, DGITGMMLAAERNNPDLIKLLLKLGVNPNV, and TGMTSLMYAASYLNVEVVRVLLEQGVDPNI. The stretch at 238–265 forms a coiled coil; it reads KQKIIKERNSIKTRNKEKEKEIKKLFNS.

The protein is Putative ankyrin repeat protein RF_1099 of Rickettsia felis (strain ATCC VR-1525 / URRWXCal2) (Rickettsia azadi).